A 395-amino-acid chain; its full sequence is uncharacterized protein (395 aa).

A disordered region spans residues 115–144 (TKPPTEGGPEKDQSSPSQTQAAPQGPSTAS). Over residues 128 to 141 (SSPSQTQAAPQGPS) the composition is skewed to low complexity.

This is an uncharacterized protein from Homo sapiens (Human).